A 283-amino-acid polypeptide reads, in one-letter code: uncharacterized protein (283 aa).

An N-terminal signal peptide occupies residues 1–21 (MKLKLKFLLISLLGSSLLLSA). Residue C22 is the site of N-palmitoyl cysteine attachment. C22 is lipidated: S-diacylglycerol cysteine.

This sequence belongs to the MG439/MG440 family.

Its subcellular location is the cell membrane. This is an uncharacterized protein from Mycoplasma pneumoniae (strain ATCC 29342 / M129 / Subtype 1) (Mycoplasmoides pneumoniae).